We begin with the raw amino-acid sequence, 548 residues long: T-complex protein 1 subunit theta (548 aa).

The segment at 528 to 548 (ATGGPKPRGPKQQDEDDDGMA) is disordered.

Belongs to the TCP-1 chaperonin family. In terms of assembly, heterooligomeric complex.

It is found in the cytoplasm. Molecular chaperone; assists the folding of proteins upon ATP hydrolysis. Known to play a role, in vitro, in the folding of actin and tubulin. Required for correct subcellular localization of pgl-1. The polypeptide is T-complex protein 1 subunit theta (Caenorhabditis briggsae).